Here is a 235-residue protein sequence, read N- to C-terminus: 1-(5-phosphoribosyl)-5-[(5-phosphoribosylamino)methylideneamino] imidazole-4-carboxamide isomerase (235 aa).

Aspartate 8 serves as the catalytic Proton acceptor. Aspartate 128 acts as the Proton donor in catalysis.

Belongs to the HisA/HisF family.

The protein localises to the cytoplasm. The catalysed reaction is 1-(5-phospho-beta-D-ribosyl)-5-[(5-phospho-beta-D-ribosylamino)methylideneamino]imidazole-4-carboxamide = 5-[(5-phospho-1-deoxy-D-ribulos-1-ylimino)methylamino]-1-(5-phospho-beta-D-ribosyl)imidazole-4-carboxamide. It functions in the pathway amino-acid biosynthesis; L-histidine biosynthesis; L-histidine from 5-phospho-alpha-D-ribose 1-diphosphate: step 4/9. In Thermus thermophilus (strain ATCC 27634 / DSM 579 / HB8), this protein is 1-(5-phosphoribosyl)-5-[(5-phosphoribosylamino)methylideneamino] imidazole-4-carboxamide isomerase.